The sequence spans 253 residues: Triosephosphate isomerase (253 aa).

Residue 8-10 participates in substrate binding; it reads NWK. The Electrophile role is filled by histidine 93. Glutamate 165 functions as the Proton acceptor in the catalytic mechanism. Substrate is bound by residues glycine 171, serine 210, and 231–232; that span reads GG.

Belongs to the triosephosphate isomerase family. Homodimer.

Its subcellular location is the cytoplasm. It carries out the reaction D-glyceraldehyde 3-phosphate = dihydroxyacetone phosphate. Its pathway is carbohydrate biosynthesis; gluconeogenesis. The protein operates within carbohydrate degradation; glycolysis; D-glyceraldehyde 3-phosphate from glycerone phosphate: step 1/1. Involved in the gluconeogenesis. Catalyzes stereospecifically the conversion of dihydroxyacetone phosphate (DHAP) to D-glyceraldehyde-3-phosphate (G3P). The protein is Triosephosphate isomerase of Francisella philomiragia subsp. philomiragia (strain ATCC 25017 / CCUG 19701 / FSC 153 / O#319-036).